The sequence spans 802 residues: Leucine--tRNA ligase (802 aa).

Residues 41 to 52 (PYPSGQGLHVGH) carry the 'HIGH' region motif. The 'KMSKS' region motif lies at 580–584 (KMSKS). K583 contributes to the ATP binding site.

The protein belongs to the class-I aminoacyl-tRNA synthetase family.

It is found in the cytoplasm. The enzyme catalyses tRNA(Leu) + L-leucine + ATP = L-leucyl-tRNA(Leu) + AMP + diphosphate. This chain is Leucine--tRNA ligase, found in Alkaliphilus oremlandii (strain OhILAs) (Clostridium oremlandii (strain OhILAs)).